The sequence spans 872 residues: Leucine-rich repeat-containing protein 66 (872 aa).

A helical transmembrane segment spans residues 4 to 24 (FYVRVTILVTGLCFVETVTTP). Asparagine 45 and asparagine 108 each carry an N-linked (GlcNAc...) asparagine glycan. LRR repeat units follow at residues 142–164 (RLQVLILQRNQLSGTPKGLWKLK), 165–186 (SLRSLDLSFNRIVHIGLSDFHG), 189–210 (QLESIYLKSNKICTIHPKAFKG), 213–234 (KLQVVDLRSNALTTLVPIVTIA), and 239–259 (HLELGLADNQWQCSESNVNFQ). Residues 339–363 (LRGMWPQSPVELRDSQDEQVTDRKD) are disordered. A compositionally biased stretch (basic and acidic residues) spans 349 to 363 (ELRDSQDEQVTDRKD). A helical transmembrane segment spans residues 371–391 (LAICLSVFITFVVAFCLGAFA). Over residues 467–483 (QMLGSNGTDPGHQQSPE) the composition is skewed to polar residues. 4 disordered regions span residues 467 to 501 (QMLGSNGTDPGHQQSPEQLKDSNESRSGDSIVLPS), 560 to 579 (GTFPSSVESRRDDLHPSQPR), 695 to 761 (NYES…SQRI), and 776 to 872 (LISG…SKHW). Asparagine 472 carries N-linked (GlcNAc...) asparagine glycosylation. Positions 484-493 (QLKDSNESRS) are enriched in basic and acidic residues. Residue serine 718 is modified to Phosphoserine. Composition is skewed to polar residues over residues 725–736 (SVENDGTSQPLP), 746–760 (SVTSAESVEDLTSQR), and 785–805 (CETNQENDSSSLDPENRSTWP). The residue at position 752 (serine 752) is a Phosphoserine. Residues 831–841 (VDWHYSLRDLE) show a composition bias toward basic and acidic residues.

Its subcellular location is the membrane. This chain is Leucine-rich repeat-containing protein 66 (Lrrc66), found in Mus musculus (Mouse).